The primary structure comprises 558 residues: Poly(A) polymerase PAPalpha (558 aa).

A compositionally biased stretch (polar residues) spans 1-17 (MNTKTYGVTEPISTNGP). Residues 1-20 (MNTKTYGVTEPISTNGPTPK) form a disordered region. ATP is bound by residues 86–88 (FGS), 99–101 (DID), aspartate 153, lysine 214, tyrosine 223, and 232–233 (GV). Positions 99, 101, and 153 each coordinate Mg(2+). A disordered region spans residues 516-558 (VYEDGEERPKKSGKKRKKVIKEDGQKRVRNESPASSASVNGSS). Positions 535–545 (IKEDGQKRVRN) are enriched in basic and acidic residues. Low complexity predominate over residues 547–558 (SPASSASVNGSS).

Belongs to the poly(A) polymerase family. Requires Mg(2+) as cofactor. The cofactor is Mn(2+).

It localises to the nucleus. The catalysed reaction is RNA(n) + ATP = RNA(n)-3'-adenine ribonucleotide + diphosphate. Its function is as follows. Polymerase that creates the 3'-poly(A) tail of mRNA's. May acquire specificity through interaction with a cleavage and polyadenylation factor. The sequence is that of Poly(A) polymerase PAPalpha (PAPALPHA) from Candida albicans (strain SC5314 / ATCC MYA-2876) (Yeast).